Reading from the N-terminus, the 267-residue chain is Hydroxyethylthiazole kinase 2 (267 aa).

Met41 is a binding site for substrate. Residues Lys116 and Thr166 each contribute to the ATP site. Substrate is bound at residue Gly193.

It belongs to the Thz kinase family. Mg(2+) serves as cofactor.

The enzyme catalyses 5-(2-hydroxyethyl)-4-methylthiazole + ATP = 4-methyl-5-(2-phosphooxyethyl)-thiazole + ADP + H(+). It functions in the pathway cofactor biosynthesis; thiamine diphosphate biosynthesis; 4-methyl-5-(2-phosphoethyl)-thiazole from 5-(2-hydroxyethyl)-4-methylthiazole: step 1/1. In terms of biological role, catalyzes the phosphorylation of the hydroxyl group of 4-methyl-5-beta-hydroxyethylthiazole (THZ). The sequence is that of Hydroxyethylthiazole kinase 2 from Streptococcus pneumoniae (strain Taiwan19F-14).